The chain runs to 247 residues: Uridylate kinase (247 aa).

14–17 (KLSG) provides a ligand contact to ATP. An involved in allosteric activation by GTP region spans residues 22 to 27 (GERGVG). Glycine 56 provides a ligand contact to UMP. Residues glycine 57 and arginine 61 each coordinate ATP. Residues aspartate 76 and 137-144 (IGSPYFST) each bind UMP. 3 residues coordinate ATP: asparagine 165, tyrosine 171, and aspartate 174.

The protein belongs to the UMP kinase family. Homohexamer.

It is found in the cytoplasm. The enzyme catalyses UMP + ATP = UDP + ADP. It participates in pyrimidine metabolism; CTP biosynthesis via de novo pathway; UDP from UMP (UMPK route): step 1/1. With respect to regulation, allosterically activated by GTP. Inhibited by UTP. Catalyzes the reversible phosphorylation of UMP to UDP. In Streptococcus pneumoniae (strain ATCC BAA-255 / R6), this protein is Uridylate kinase.